Reading from the N-terminus, the 303-residue chain is tRNA dimethylallyltransferase (303 aa).

ATP is bound at residue 12–19 (GPTGVGKT). Residue 14–19 (TGVGKT) coordinates substrate. An interaction with substrate tRNA region spans residues 37-40 (DSAQ).

This sequence belongs to the IPP transferase family. Monomer. It depends on Mg(2+) as a cofactor.

The catalysed reaction is adenosine(37) in tRNA + dimethylallyl diphosphate = N(6)-dimethylallyladenosine(37) in tRNA + diphosphate. Functionally, catalyzes the transfer of a dimethylallyl group onto the adenine at position 37 in tRNAs that read codons beginning with uridine, leading to the formation of N6-(dimethylallyl)adenosine (i(6)A). The protein is tRNA dimethylallyltransferase of Fusobacterium nucleatum subsp. nucleatum (strain ATCC 25586 / DSM 15643 / BCRC 10681 / CIP 101130 / JCM 8532 / KCTC 2640 / LMG 13131 / VPI 4355).